Consider the following 233-residue polypeptide: uncharacterized protein (233 aa).

Residues 21–43 (RWRTATSADHPRRGRPAAQAVRR) form a disordered region.

This is an uncharacterized protein from Mycobacterium tuberculosis (strain CDC 1551 / Oshkosh).